The following is a 177-amino-acid chain: PBAN-type neuropeptides (177 aa).

An N-terminal signal peptide occupies residues 1-23; the sequence is MIVTGNPVCAIALLLCLVFRASG. Positions 24-54 are excised as a propeptide; the sequence is EYELEMSSGGSNDGRSPSNDFGSCTDGKCTK. The tract at residues 28 to 73 is disordered; it reads EMSSGGSNDGRSPSNDFGSCTDGKCTKRTTTTQESGISSGMWFGPR. Polar residues predominate over residues 31–45; sequence SGGSNDGRSPSNDFG. Low complexity predominate over residues 47–59; sequence CTDGKCTKRTTTT. Leu-74 is subject to Leucine amide. The propeptide occupies 78–113; the sequence is HKSNEKQQINPEIEMLVNALDQPGMRWTVITIPANE. Leucine amide occurs at positions 124, 154, and 166. Residues 169–177 constitute a propeptide that is removed on maturation; it reads QSRSVSRKI.

It belongs to the pyrokinin family. Pyrokinins (PK) 1 to 4 are expressed in the retrocerebral complex. PK 1 is expressed in central brain, anntennal lobes and abominal ganglia. PK 2 is expressed in optical lobes and in gnathal, thoracic and abdominal ganglia. PK 3 is expressed in optical lobes and in thoracic and abdominal ganglia (at protein level).

Its subcellular location is the secreted. In terms of biological role, pyrokinins mediate visceral muscle contractile activity (myotropic activity). The sequence is that of PBAN-type neuropeptides from Camponotus floridanus (Florida carpenter ant).